The sequence spans 356 residues: tRNA N6-adenosine threonylcarbamoyltransferase (356 aa).

Residues His114 and His118 each contribute to the Fe cation site. Residues 136-140, Asp169, Gly182, and Asn280 contribute to the substrate site; that span reads LVSGG. Asp308 contacts Fe cation. Residues 333 to 356 are disordered; sequence ARPRWPLDNSQPALLGSGKKGAKA.

The protein belongs to the KAE1 / TsaD family. Requires Fe(2+) as cofactor.

It is found in the cytoplasm. It catalyses the reaction L-threonylcarbamoyladenylate + adenosine(37) in tRNA = N(6)-L-threonylcarbamoyladenosine(37) in tRNA + AMP + H(+). In terms of biological role, required for the formation of a threonylcarbamoyl group on adenosine at position 37 (t(6)A37) in tRNAs that read codons beginning with adenine. Is involved in the transfer of the threonylcarbamoyl moiety of threonylcarbamoyl-AMP (TC-AMP) to the N6 group of A37, together with TsaE and TsaB. TsaD likely plays a direct catalytic role in this reaction. This Dinoroseobacter shibae (strain DSM 16493 / NCIMB 14021 / DFL 12) protein is tRNA N6-adenosine threonylcarbamoyltransferase.